We begin with the raw amino-acid sequence, 69 residues long: Putative membrane protein insertion efficiency factor (69 aa).

The protein belongs to the UPF0161 family.

Its subcellular location is the cell inner membrane. Its function is as follows. Could be involved in insertion of integral membrane proteins into the membrane. In Laribacter hongkongensis (strain HLHK9), this protein is Putative membrane protein insertion efficiency factor.